We begin with the raw amino-acid sequence, 186 residues long: Phosphopantetheine adenylyltransferase (186 aa).

Threonine 14 is a substrate binding site. ATP is bound by residues 14–15 (TF) and histidine 22. Substrate-binding residues include lysine 46, leucine 78, and arginine 92. ATP-binding positions include 93-95 (GLR), glutamate 103, and 128-134 (WLYISST).

Belongs to the bacterial CoaD family. As to quaternary structure, homohexamer. It depends on Mg(2+) as a cofactor.

It localises to the cytoplasm. It catalyses the reaction (R)-4'-phosphopantetheine + ATP + H(+) = 3'-dephospho-CoA + diphosphate. The protein operates within cofactor biosynthesis; coenzyme A biosynthesis; CoA from (R)-pantothenate: step 4/5. Its function is as follows. Reversibly transfers an adenylyl group from ATP to 4'-phosphopantetheine, yielding dephospho-CoA (dPCoA) and pyrophosphate. In Nitratidesulfovibrio vulgaris (strain ATCC 29579 / DSM 644 / CCUG 34227 / NCIMB 8303 / VKM B-1760 / Hildenborough) (Desulfovibrio vulgaris), this protein is Phosphopantetheine adenylyltransferase.